Reading from the N-terminus, the 473-residue chain is Histone-lysine N-methyltransferase SET5 (473 aa).

The SET domain occupies 107 to 381; the sequence is ANVHIIMTSK…SGEELTTTYV (275 aa).

Belongs to the class V-like SAM-binding methyltransferase superfamily. Histone-lysine methyltransferase family. SET5 subfamily.

Its subcellular location is the nucleus. It localises to the chromosome. It is found in the cytoplasm. The catalysed reaction is L-lysyl-[histone] + S-adenosyl-L-methionine = N(6)-methyl-L-lysyl-[histone] + S-adenosyl-L-homocysteine + H(+). Functionally, histone methyltransferase that monomethylates 'Lys-5', 'Lys-8' and 'Lys-12' of histone H4 (H4K5me1, H4K8me1 and H4K12me1, respectively), thereby controlling gene expression and remodeling chromatin structures. The protein is Histone-lysine N-methyltransferase SET5 (SET5) of Candida albicans (strain SC5314 / ATCC MYA-2876) (Yeast).